The primary structure comprises 483 residues: Aspartyl/glutamyl-tRNA(Asn/Gln) amidotransferase subunit B (483 aa).

It belongs to the GatB/GatE family. GatB subfamily. In terms of assembly, heterotrimer of A, B and C subunits.

It carries out the reaction L-glutamyl-tRNA(Gln) + L-glutamine + ATP + H2O = L-glutaminyl-tRNA(Gln) + L-glutamate + ADP + phosphate + H(+). The catalysed reaction is L-aspartyl-tRNA(Asn) + L-glutamine + ATP + H2O = L-asparaginyl-tRNA(Asn) + L-glutamate + ADP + phosphate + 2 H(+). Functionally, allows the formation of correctly charged Asn-tRNA(Asn) or Gln-tRNA(Gln) through the transamidation of misacylated Asp-tRNA(Asn) or Glu-tRNA(Gln) in organisms which lack either or both of asparaginyl-tRNA or glutaminyl-tRNA synthetases. The reaction takes place in the presence of glutamine and ATP through an activated phospho-Asp-tRNA(Asn) or phospho-Glu-tRNA(Gln). The protein is Aspartyl/glutamyl-tRNA(Asn/Gln) amidotransferase subunit B of Rickettsia bellii (strain RML369-C).